A 288-amino-acid polypeptide reads, in one-letter code: Phosphatidylserine decarboxylase proenzyme (288 aa).

Residues Asp-101, His-158, and Ser-262 each act as charge relay system; for autoendoproteolytic cleavage activity in the active site. The Schiff-base intermediate with substrate; via pyruvic acid; for decarboxylase activity role is filled by Ser-262. The residue at position 262 (Ser-262) is a Pyruvic acid (Ser); by autocatalysis.

This sequence belongs to the phosphatidylserine decarboxylase family. PSD-B subfamily. Prokaryotic type I sub-subfamily. As to quaternary structure, heterodimer of a large membrane-associated beta subunit and a small pyruvoyl-containing alpha subunit. Pyruvate is required as a cofactor. Is synthesized initially as an inactive proenzyme. Formation of the active enzyme involves a self-maturation process in which the active site pyruvoyl group is generated from an internal serine residue via an autocatalytic post-translational modification. Two non-identical subunits are generated from the proenzyme in this reaction, and the pyruvate is formed at the N-terminus of the alpha chain, which is derived from the carboxyl end of the proenzyme. The autoendoproteolytic cleavage occurs by a canonical serine protease mechanism, in which the side chain hydroxyl group of the serine supplies its oxygen atom to form the C-terminus of the beta chain, while the remainder of the serine residue undergoes an oxidative deamination to produce ammonia and the pyruvoyl prosthetic group on the alpha chain. During this reaction, the Ser that is part of the protease active site of the proenzyme becomes the pyruvoyl prosthetic group, which constitutes an essential element of the active site of the mature decarboxylase.

The protein resides in the cell membrane. The catalysed reaction is a 1,2-diacyl-sn-glycero-3-phospho-L-serine + H(+) = a 1,2-diacyl-sn-glycero-3-phosphoethanolamine + CO2. It participates in phospholipid metabolism; phosphatidylethanolamine biosynthesis; phosphatidylethanolamine from CDP-diacylglycerol: step 2/2. Its function is as follows. Catalyzes the formation of phosphatidylethanolamine (PtdEtn) from phosphatidylserine (PtdSer). This is Phosphatidylserine decarboxylase proenzyme from Alkalilimnicola ehrlichii (strain ATCC BAA-1101 / DSM 17681 / MLHE-1).